The chain runs to 223 residues: Zinc-finger homeodomain protein 12 (223 aa).

The segment covering 1-20 (MSSLSKPNRQFLSPTTNNQD) has biased composition (polar residues). Residues 1–24 (MSSLSKPNRQFLSPTTNNQDTGRE) form a disordered region. Residues 37 to 88 (YNECLKNHAVSLGGHALDGCGEFTPKSTTILTDPPSLRCDACGCHRNFHRRS) form a ZF-HD dimerization-type; degenerate zinc finger. The segment at residues 147 to 204 (KKHKRTKFTAEQKVKMRGFAERAGWKINGWDEKWVREFCSEVGIERKVLKVWIHNNKY) is a DNA-binding region (homeobox; atypical).

As to quaternary structure, homo- and heterodimer with other ZFHD proteins. Interacts with ZHD11.

The protein localises to the nucleus. Putative transcription factor. The polypeptide is Zinc-finger homeodomain protein 12 (ZHD12) (Arabidopsis thaliana (Mouse-ear cress)).